The sequence spans 120 residues: Large ribosomal subunit protein uL18 (120 aa).

This sequence belongs to the universal ribosomal protein uL18 family. In terms of assembly, part of the 50S ribosomal subunit; part of the 5S rRNA/L5/L18/L25 subcomplex. Contacts the 5S and 23S rRNAs.

This is one of the proteins that bind and probably mediate the attachment of the 5S RNA into the large ribosomal subunit, where it forms part of the central protuberance. The sequence is that of Large ribosomal subunit protein uL18 from Rhizobium meliloti (strain 1021) (Ensifer meliloti).